The primary structure comprises 340 residues: Ferredoxin--NADP reductase (340 aa).

FAD is bound by residues Asp-33, Gln-41, Tyr-46, Ala-86, Phe-120, Asp-286, and Thr-327.

This sequence belongs to the ferredoxin--NADP reductase type 2 family. In terms of assembly, homodimer. FAD is required as a cofactor.

It catalyses the reaction 2 reduced [2Fe-2S]-[ferredoxin] + NADP(+) + H(+) = 2 oxidized [2Fe-2S]-[ferredoxin] + NADPH. This chain is Ferredoxin--NADP reductase, found in Rickettsia conorii (strain ATCC VR-613 / Malish 7).